Reading from the N-terminus, the 480-residue chain is MSETTPHWLTKRADLSPDKKAIEFEDGSSITYLELFHRSQSYARKLGKLGFRQGDHIAILSTNCAEMIQIIYACSYLGAVAVLLNTKLTINELNQQLLDSDAKVIITSESFKASEFVLQRMDYNELESVTEDTSIITLKSEIYFDDIFTMMYTSGTTGFPKAVQQTFGNHWWSATSSALNLGLHDNDKWLIPLPLFHVSGLSTMLKSVIYGMPIYVLEKFEVEKVHNAIMDRKVTIVSVVTVMVQRLIKRLGNHHYPNDFRCMLLGGGPAPKSLLEQAKLKNIPVFQSYGMTETSSQIVTLTPEDALKKIGSAGKPLFPAQLKIAHNENNPNQIGEILVKGPMVTKGYYKRAETNKEVFENNWLHTGDMGYLDEQGYLYVVDRRNDLIISGGENIYPSEIENVLVQIEGIEEAGVKGSPNEEWGMVPIAFIVCSRPISENEIAAHLEKYLAKYKRPKEIHVVNELPRNAANKLVRHNLGK.

It belongs to the ATP-dependent AMP-binding enzyme family. MenE subfamily.

The catalysed reaction is 2-succinylbenzoate + ATP + CoA = 2-succinylbenzoyl-CoA + AMP + diphosphate. Its pathway is quinol/quinone metabolism; 1,4-dihydroxy-2-naphthoate biosynthesis; 1,4-dihydroxy-2-naphthoate from chorismate: step 5/7. The protein operates within quinol/quinone metabolism; menaquinone biosynthesis. Its function is as follows. Converts 2-succinylbenzoate (OSB) to 2-succinylbenzoyl-CoA (OSB-CoA). In Oceanobacillus iheyensis (strain DSM 14371 / CIP 107618 / JCM 11309 / KCTC 3954 / HTE831), this protein is 2-succinylbenzoate--CoA ligase.